A 195-amino-acid polypeptide reads, in one-letter code: Large ribosomal subunit protein bL25 (195 aa).

This sequence belongs to the bacterial ribosomal protein bL25 family. CTC subfamily. As to quaternary structure, part of the 50S ribosomal subunit; part of the 5S rRNA/L5/L18/L25 subcomplex. Contacts the 5S rRNA. Binds to the 5S rRNA independently of L5 and L18.

Functionally, this is one of the proteins that binds to the 5S RNA in the ribosome where it forms part of the central protuberance. The sequence is that of Large ribosomal subunit protein bL25 from Geobacter metallireducens (strain ATCC 53774 / DSM 7210 / GS-15).